Reading from the N-terminus, the 198-residue chain is Probable GTP-binding protein EngB (198 aa).

In terms of domain architecture, EngB-type G spans 21 to 195 (NFSEVAFLGR…EDIIIDQTLG (175 aa)). GTP is bound by residues 29-36 (GRSNVGKS), 56-60 (GKTQL), 81-84 (DLPG), 151-154 (TKCD), and 174-176 (VSN). Positions 36 and 58 each coordinate Mg(2+).

The protein belongs to the TRAFAC class TrmE-Era-EngA-EngB-Septin-like GTPase superfamily. EngB GTPase family. It depends on Mg(2+) as a cofactor.

Its function is as follows. Necessary for normal cell division and for the maintenance of normal septation. This is Probable GTP-binding protein EngB from Campylobacter jejuni subsp. jejuni serotype O:6 (strain 81116 / NCTC 11828).